A 105-amino-acid polypeptide reads, in one-letter code: Defensin-like protein 106 (105 aa).

The signal sequence occupies residues 1–24; it reads MANTPKTLIAFVFSVIVIISYVHC. Intrachain disulfides connect cysteine 57-cysteine 94, cysteine 63-cysteine 87, cysteine 73-cysteine 92, and cysteine 77-cysteine 93.

Belongs to the DEFL family.

Its subcellular location is the secreted. The polypeptide is Defensin-like protein 106 (Arabidopsis thaliana (Mouse-ear cress)).